Consider the following 356-residue polypeptide: Histidinol-phosphate aminotransferase (356 aa).

The residue at position 214 (K214) is an N6-(pyridoxal phosphate)lysine.

Belongs to the class-II pyridoxal-phosphate-dependent aminotransferase family. Histidinol-phosphate aminotransferase subfamily. Homodimer. The cofactor is pyridoxal 5'-phosphate.

It carries out the reaction L-histidinol phosphate + 2-oxoglutarate = 3-(imidazol-4-yl)-2-oxopropyl phosphate + L-glutamate. It participates in amino-acid biosynthesis; L-histidine biosynthesis; L-histidine from 5-phospho-alpha-D-ribose 1-diphosphate: step 7/9. The polypeptide is Histidinol-phosphate aminotransferase (Escherichia coli O81 (strain ED1a)).